The chain runs to 663 residues: GPI mannosyltransferase 3 (663 aa).

Residues 1–11 (MPMSARSRRSN) show a composition bias toward basic residues. The segment at 1 to 44 (MPMSARSRRSNPRLPPSPSSSSSSDAVRASPHSSPPSRLRPPSA) is disordered. Residues 19 to 42 (SSSSSSDAVRASPHSSPPSRLRPP) show a composition bias toward low complexity. The next 8 membrane-spanning stretches (helical) occupy residues 47-67 (DVSS…ALTV), 110-130 (PLIF…LGLT), 137-157 (LLIA…DFYT), 226-246 (VLAV…FPPL), 269-289 (YASQ…LVGL), 304-324 (GSIL…LSVI), 335-355 (LLPA…IPAL), and 367-387 (LTLI…TLFH). Positions 492–512 (HIPRRPSYATPPSSQRQPTQL) are disordered. A compositionally biased stretch (polar residues) spans 501 to 511 (TPPSSQRQPTQ).

This sequence belongs to the glycosyltransferase 22 family. PIGB subfamily.

The protein resides in the endoplasmic reticulum membrane. It participates in glycolipid biosynthesis; glycosylphosphatidylinositol-anchor biosynthesis. Its function is as follows. Mannosyltransferase involved in glycosylphosphatidylinositol-anchor biosynthesis. Transfers the third mannose to Man2-GlcN-acyl-PI during GPI precursor assembly. The chain is GPI mannosyltransferase 3 (gpi10) from Emericella nidulans (strain FGSC A4 / ATCC 38163 / CBS 112.46 / NRRL 194 / M139) (Aspergillus nidulans).